Consider the following 365-residue polypeptide: Methylthioribose-1-phosphate isomerase (365 aa).

The active-site Proton donor is the Asp249.

This sequence belongs to the eIF-2B alpha/beta/delta subunits family. MtnA subfamily.

It localises to the cytoplasm. The protein resides in the nucleus. The enzyme catalyses 5-(methylsulfanyl)-alpha-D-ribose 1-phosphate = 5-(methylsulfanyl)-D-ribulose 1-phosphate. The protein operates within amino-acid biosynthesis; L-methionine biosynthesis via salvage pathway; L-methionine from S-methyl-5-thio-alpha-D-ribose 1-phosphate: step 1/6. In terms of biological role, catalyzes the interconversion of methylthioribose-1-phosphate (MTR-1-P) into methylthioribulose-1-phosphate (MTRu-1-P). The polypeptide is Methylthioribose-1-phosphate isomerase (Ostreococcus lucimarinus (strain CCE9901)).